Consider the following 353-residue polypeptide: Chorismate synthase (353 aa).

Arg48 contributes to the NADP(+) binding site. Residues 128–130, Gly280, 295–299, and Arg321 each bind FMN; these read RAS and KPIPS.

It belongs to the chorismate synthase family. In terms of assembly, homotetramer. FMNH2 is required as a cofactor.

The catalysed reaction is 5-O-(1-carboxyvinyl)-3-phosphoshikimate = chorismate + phosphate. Its pathway is metabolic intermediate biosynthesis; chorismate biosynthesis; chorismate from D-erythrose 4-phosphate and phosphoenolpyruvate: step 7/7. Functionally, catalyzes the anti-1,4-elimination of the C-3 phosphate and the C-6 proR hydrogen from 5-enolpyruvylshikimate-3-phosphate (EPSP) to yield chorismate, which is the branch point compound that serves as the starting substrate for the three terminal pathways of aromatic amino acid biosynthesis. This reaction introduces a second double bond into the aromatic ring system. This chain is Chorismate synthase, found in Nitratidesulfovibrio vulgaris (strain DSM 19637 / Miyazaki F) (Desulfovibrio vulgaris).